Consider the following 427-residue polypeptide: Acyl-lipid 8-desaturase (427 aa).

Residues 1 to 24 form a disordered region; sequence MGRGGDSSGQAHPAAELAVPSDRA. The region spanning 36–84 is the Cytochrome b5 heme-binding domain; sequence IVLYGKRVDVTKFQRTHPGGSKVFRIFQDRDATEQFESYHSKRAIKMME. Heme is bound by residues His-52 and His-75. The Histidine box-1 motif lies at 178-182; sequence HSVFK. The helical transmembrane segment at 189–209 threads the bilayer; it reads VGWNNAAGYFLGFVQGYAVEW. A Histidine box-2 motif is present at residues 213–218; that stretch reads RHNTHH. Helical transmembrane passes span 261–281 and 286–306; these read VPVMAILDLYWRLESIAYVAM and MLPQALALVAHYAIVAWVFAG. The Histidine box-3 signature appears at 373–377; the sequence is QTEHH.

This sequence belongs to the fatty acid desaturase type 1 family. The cofactor is Fe(2+).

The protein resides in the membrane. Fatty acid desaturase that introduces a cis double bond at the 8-position in 20-carbon polyunsaturated fatty acids incorporated in a glycerolipid that contain a Delta(8) double bond to yield (20:4(8,11,14,17)). In Rebecca salina (Marine microalga), this protein is Acyl-lipid 8-desaturase.